The primary structure comprises 828 residues: Glycerol-3-phosphate acyltransferase (828 aa).

The HXXXXD motif signature appears at 310-315; sequence HRSHID.

This sequence belongs to the GPAT/DAPAT family.

Its subcellular location is the cell inner membrane. It carries out the reaction sn-glycerol 3-phosphate + an acyl-CoA = a 1-acyl-sn-glycero-3-phosphate + CoA. It functions in the pathway phospholipid metabolism; CDP-diacylglycerol biosynthesis; CDP-diacylglycerol from sn-glycerol 3-phosphate: step 1/3. The sequence is that of Glycerol-3-phosphate acyltransferase from Pseudomonas putida (strain ATCC 47054 / DSM 6125 / CFBP 8728 / NCIMB 11950 / KT2440).